The following is a 342-amino-acid chain: S-adenosylmethionine:tRNA ribosyltransferase-isomerase (342 aa).

The protein belongs to the QueA family. Monomer.

The protein localises to the cytoplasm. The enzyme catalyses 7-aminomethyl-7-carbaguanosine(34) in tRNA + S-adenosyl-L-methionine = epoxyqueuosine(34) in tRNA + adenine + L-methionine + 2 H(+). The protein operates within tRNA modification; tRNA-queuosine biosynthesis. In terms of biological role, transfers and isomerizes the ribose moiety from AdoMet to the 7-aminomethyl group of 7-deazaguanine (preQ1-tRNA) to give epoxyqueuosine (oQ-tRNA). The chain is S-adenosylmethionine:tRNA ribosyltransferase-isomerase from Streptococcus sanguinis (strain SK36).